Here is a 5405-residue protein sequence, read N- to C-terminus: IgGFc-binding protein (5405 aa).

The N-terminal stretch at 1-23 is a signal peptide; that stretch reads MGALWSWWILWAGATLLWGLTQE. Positions 24 to 450 are igGFc-binding; that stretch reads ASVDLKNTGR…EPSCEGMQCA (427 aa). Asparagine 75 and asparagine 91 each carry an N-linked (GlcNAc...) asparagine glycan. The VWFD 1 domain occupies 470–650; sequence AVCRAQGDPH…KLDDGDYLCE (181 aa). 2 cysteine pairs are disulfide-bonded: cysteine 472–cysteine 611 and cysteine 494–cysteine 649. A TIL 1 domain is found at 745–799; that stretch reads CPANSRYELCGPACPTSCNGAAAPSNCSGRPCVEGCVCLPGFVASGGACVPASSC. In terms of domain architecture, VWFD 2 spans 862–1041; it reads GTCQGSGDPH…WQEETRPGCG (180 aa). 2 cysteine pairs are disulfide-bonded: cysteine 864–cysteine 1003 and cysteine 886–cysteine 1040. A TIL 2 domain is found at 1136-1189; the sequence is CPPHSHYEACSYGCPLSCGDLPVPGGCGSECHEGCVCDEGFALSGESCLPLASC. Residues 1250 to 1429 form the VWFD 3 domain; it reads STCQASGDPH…EEVVPDSPCL (180 aa). Disulfide bonds link cysteine 1252-cysteine 1390 and cysteine 1274-cysteine 1428. The N-linked (GlcNAc...) (complex) asparagine glycan is linked to asparagine 1317. Residues 1532-1585 enclose the TIL 3 domain; sequence CPPNSHYELCADTCSLGCSALSAPPQCQDGCAEGCQCDSGFLYNGQACVPIQQC. One can recognise a VWFD 4 domain in the interval 1671 to 1854; the sequence is ATCWLWGDPH…RAPGWDPLCW (184 aa). 3 disulfides stabilise this stretch: cysteine 1673/cysteine 1815, cysteine 1695/cysteine 1853, and cysteine 1704/cysteine 1812. The N-linked (GlcNAc...) asparagine glycan is linked to asparagine 1743. The TIL 4 domain maps to 1950 to 2007; sequence CPENSHYEVCGSPCPASCPSPAPLTTPAVCEGPCVEGCQCDAGFVLSADRCVPLNNGC. Residues 2070–2253 enclose the VWFD 5 domain; it reads AECQAWGDPH…VSKPCPSPCT (184 aa). Disulfide bonds link cysteine 2072-cysteine 2211 and cysteine 2094-cysteine 2252. N-linked (GlcNAc...) asparagine glycosylation is present at asparagine 2138. A TIL 5 domain is found at 2337–2390; it reads CPAHSHYELCGDSCPGSCPSLSAPEGCESACREGCVCDAGFVLSGDTCVPVGQC. The 180-residue stretch at 2451–2630 folds into the VWFD 6 domain; sequence TTCQASGDPH…EEVVPDSPCL (180 aa). 2 disulfides stabilise this stretch: cysteine 2453–cysteine 2591 and cysteine 2475–cysteine 2629. The N-linked (GlcNAc...) asparagine glycan is linked to asparagine 2518. Positions 2733–2786 constitute a TIL 6 domain; it reads CPQNSHYELCADTCSLGCSALSAPLQCPDGCAEGCQCDSGFLYNGQACVPIQQC. One can recognise a VWFD 7 domain in the interval 2872-3055; that stretch reads ATCWLWGDPH…RAPGWDPLCW (184 aa). Intrachain disulfides connect cysteine 2874/cysteine 3016, cysteine 2896/cysteine 3054, and cysteine 2905/cysteine 3013. Positions 3151 to 3208 constitute a TIL 7 domain; the sequence is CPENSHYEVCGPPCPASCPSPAPLTTPAVCEGPCVEGCQCDAGFVLSADRCVPLNNGC. Residues 3271–3454 enclose the VWFD 8 domain; the sequence is AECQAWGDPH…VSKPCPSPCT (184 aa). 2 disulfides stabilise this stretch: cysteine 3273-cysteine 3412 and cysteine 3295-cysteine 3453. Residues 3538–3591 form the TIL 8 domain; the sequence is CPAHSHYELCGDSCPGSCPSLSAPEGCESACREGCVCDAGFVLSGDTCVPVGQC. One can recognise a VWFD 9 domain in the interval 3652–3831; sequence TTCQASGDPH…EEVVPDSPCL (180 aa). 2 disulfides stabilise this stretch: cysteine 3654–cysteine 3792 and cysteine 3676–cysteine 3830. Asparagine 3719 carries N-linked (GlcNAc...) asparagine glycosylation. Positions 3934 to 3987 constitute a TIL 9 domain; it reads CPQNSHYELCADTCSLGCSALSAPLQCPDGCAEGCQCDSGFLYNGQACVPIQQC. A VWFD 10 domain is found at 4073–4256; the sequence is ATCWLWGDPH…RAPGWDPLCW (184 aa). 3 cysteine pairs are disulfide-bonded: cysteine 4075–cysteine 4217, cysteine 4097–cysteine 4255, and cysteine 4106–cysteine 4214. Residue asparagine 4145 is glycosylated (N-linked (GlcNAc...) asparagine). The region spanning 4352–4409 is the TIL 10 domain; that stretch reads CPENSHYEVCGPPCPASCPSPAPLTTPAVCEGPCVEGCQCDAGFVLSADRCVPLNNGC. The 184-residue stretch at 4472–4655 folds into the VWFD 11 domain; sequence AECQAWGDPH…VSKPCPSPCT (184 aa). Intrachain disulfides connect cysteine 4474/cysteine 4613 and cysteine 4496/cysteine 4654. N-linked (GlcNAc...) asparagine glycosylation is present at asparagine 4540. The 54-residue stretch at 4739–4792 folds into the TIL 11 domain; sequence CPAHSHYELCGDSCPVSCPSLSAPEGCESACREGCVCDAGFVLSGDTCVPVGQC. The 172-residue stretch at 4854-5025 folds into the VWFD 12 domain; sequence GRCLANGGIH…RAPGSSKGCG (172 aa). Intrachain disulfides connect cysteine 4856-cysteine 4986 and cysteine 4878-cysteine 5024. The region spanning 5121–5174 is the TIL 12 domain; it reads CPAHSHYSICTRTCQGSCAALSGLTGCTTRCFEGCECDDRFLLSQGVCIPVQDC. In terms of domain architecture, VWFD 13 spans 5233-5404; the sequence is GLCVLSVGAN…WRAQDFSPCY (172 aa). Cysteines 5235 and 5372 form a disulfide.

As to quaternary structure, interacts with the Fc portion of IgG and with MUC2. In terms of tissue distribution, mainly expressed in placenta and colon epithelium. Expressed in thyroid, and down-regulated in thyroid carcinomas. Present in serum, with higher levels in patients with various autoimmune diseases (at protein level).

The protein localises to the secreted. May be involved in the maintenance of the mucosal structure as a gel-like component of the mucosa. This is IgGFc-binding protein (FCGBP) from Homo sapiens (Human).